The sequence spans 636 residues: Eukaryotic peptide chain release factor GTP-binding subunit ERF3A (636 aa).

Composition is skewed to gly residues over residues 1–16 (MDPSSGGGGGGGGGGS) and 103–116 (AAGGDHGAGSGAGG). Disordered stretches follow at residues 1 to 54 (MDPS…AAVA) and 90 to 206 (LRGP…PPGA). Over residues 121 to 138 (VESSQDQSCEGSNSTVSM) the composition is skewed to polar residues. The segment covering 183-193 (STQEMMEEEEE) has biased composition (acidic residues). The region spanning 209 to 435 (KEHVNVVFIG…DNLPNFNRSV (227 aa)) is the tr-type G domain. The segment at 218-225 (GHVDAGKS) is G1. A GTP-binding site is contributed by 221 to 226 (DAGKST). Residues 274–278 (GKTVE) form a G2 region. A G3 region spans residues 295 to 298 (DAPG). Residues 357-360 (NKMD) and 399-401 (SGL) contribute to the GTP site. The segment at 357-360 (NKMD) is G4. The segment at 399–401 (SGL) is G5.

Belongs to the TRAFAC class translation factor GTPase superfamily. Classic translation factor GTPase family. ERF3 subfamily. In terms of assembly, component of the eRF1-eRF3-GTP ternary complex, composed of ETF1/ERF1 and ERF3 (GSPT1/ERF3A or GSPT2/ERF3B) and GTP. Component of the transient SURF (SMG1-UPF1-eRF1-eRF3) complex. The ETF1-GSPT1 complex interacts with JMJD4. Interacts with PABPC1. Interacts with SHFL.

The enzyme catalyses GTP + H2O = GDP + phosphate + H(+). In terms of biological role, GTPase component of the eRF1-eRF3-GTP ternary complex, a ternary complex that mediates translation termination in response to the termination codons UAA, UAG and UGA. GSPT1/ERF3A mediates ETF1/ERF1 delivery to stop codons: The eRF1-eRF3-GTP complex binds to a stop codon in the ribosomal A-site. GTP hydrolysis by GSPT1/ERF3A induces a conformational change that leads to its dissociation, permitting ETF1/ERF1 to accommodate fully in the A-site. Component of the transient SURF complex which recruits UPF1 to stalled ribosomes in the context of nonsense-mediated decay (NMD) of mRNAs containing premature stop codons. Required for SHFL-mediated translation termination which inhibits programmed ribosomal frameshifting (-1PRF) of mRNA from viruses and cellular genes. This is Eukaryotic peptide chain release factor GTP-binding subunit ERF3A (Gspt1) from Mus musculus (Mouse).